Reading from the N-terminus, the 167-residue chain is Translation initiation factor IF-3 (167 aa).

It belongs to the IF-3 family. As to quaternary structure, monomer.

The protein localises to the cytoplasm. IF-3 binds to the 30S ribosomal subunit and shifts the equilibrium between 70S ribosomes and their 50S and 30S subunits in favor of the free subunits, thus enhancing the availability of 30S subunits on which protein synthesis initiation begins. The protein is Translation initiation factor IF-3 of Bacillus anthracis.